The chain runs to 643 residues: Threonine--tRNA ligase (643 aa).

Positions 3–64 constitute a TGS domain; that stretch reads DVVKITFPDG…EEDGAISIIT (62 aa). Positions 245 to 542 are catalytic; it reads DHRKLGKELD…LIEEYKGAFP (298 aa). Zn(2+) is bound by residues Cys-338, His-389, and His-519.

The protein belongs to the class-II aminoacyl-tRNA synthetase family. Homodimer. Zn(2+) is required as a cofactor.

The protein localises to the cytoplasm. It catalyses the reaction tRNA(Thr) + L-threonine + ATP = L-threonyl-tRNA(Thr) + AMP + diphosphate + H(+). Its function is as follows. Catalyzes the attachment of threonine to tRNA(Thr) in a two-step reaction: L-threonine is first activated by ATP to form Thr-AMP and then transferred to the acceptor end of tRNA(Thr). Also edits incorrectly charged L-seryl-tRNA(Thr). The protein is Threonine--tRNA ligase of Anoxybacillus flavithermus (strain DSM 21510 / WK1).